Reading from the N-terminus, the 364-residue chain is MPLTYRSTLTQFLIEERRRFPNASGDFNALILDVALACRAIARAVALGELGGAMGNHAAETGGSVNVQGETQKKLDVLSNEVFIRRTEWAGNLAGMASEEMELPYQIPQQYPRGKYMLVFDPLDGSSNIDVNVCVGSIFSVLRAPQDALDSGRDLNEADFLQAGRQQVAAGYAVYGPSTLLVLTVGNGVNGFTLDPNLGEFMLTHPKMQIPPETHEFAINASNSRFWQAPVKRYVDECLAGQTGPRGKDFNMRWIASMVAEAHRILMRGGVFMYPRDNKDPAKPGRLRLLYEANPVGMLMEQAGGRASTGELPMLDVQPTSLHQRIGLVFGSKNEVERIERYHAEPVQAEPSNPLFAERSLFRS.

Glu-99, Asp-121, Leu-123, and Asp-124 together coordinate Mg(2+). Residues 124–127 and Asn-220 each bind substrate; that span reads DGSS. Glu-292 contacts Mg(2+).

It belongs to the FBPase class 1 family. In terms of assembly, homotetramer. Mg(2+) is required as a cofactor.

The protein resides in the cytoplasm. It carries out the reaction beta-D-fructose 1,6-bisphosphate + H2O = beta-D-fructose 6-phosphate + phosphate. Its pathway is carbohydrate biosynthesis; gluconeogenesis. The protein is Fructose-1,6-bisphosphatase class 1 1 of Albidiferax ferrireducens (strain ATCC BAA-621 / DSM 15236 / T118) (Rhodoferax ferrireducens).